A 487-amino-acid chain; its full sequence is Cobyric acid synthase (487 aa).

Residues 249-435 (GIDIAIVRLP…IHGIFDEGDF (187 aa)) enclose the GATase cobBQ-type domain. C330 (nucleophile) is an active-site residue. H427 is an active-site residue.

This sequence belongs to the CobB/CobQ family. CobQ subfamily.

It participates in cofactor biosynthesis; adenosylcobalamin biosynthesis. Its function is as follows. Catalyzes amidations at positions B, D, E, and G on adenosylcobyrinic A,C-diamide. NH(2) groups are provided by glutamine, and one molecule of ATP is hydrogenolyzed for each amidation. In Clostridium perfringens (strain SM101 / Type A), this protein is Cobyric acid synthase.